Reading from the N-terminus, the 221-residue chain is Placenta growth factor (221 aa).

An N-terminal signal peptide occupies residues 1 to 18 (MPVMRLFPCFLQLLAGLA). The N-linked (GlcNAc...) asparagine glycan is linked to N33. Cystine bridges form between C52/C94, C83/C128, and C87/C130. A glycan (N-linked (GlcNAc...) asparagine) is linked at N101. A disordered region spans residues 175–221 (QSAVWPSSPVPEEIPRMHPGRNGKKQQRKPLREKMKPERCGDAVPRR). A compositionally biased stretch (basic residues) spans 192–203 (HPGRNGKKQQRK). Residues 193-213 (PGRNGKKQQRKPLREKMKPER) are heparin-binding. Over residues 204–221 (PLREKMKPERCGDAVPRR) the composition is skewed to basic and acidic residues.

Belongs to the PDGF/VEGF growth factor family. Antiparallel homodimer; disulfide-linked. Also found as heterodimer with VEGFA/VEGF. Isoform PlGF-3 is found both as homodimer and as monomer. N-glycosylated. In terms of tissue distribution, while the three isoforms are present in most placental tissues, PlGF-2 is specific to early (8 week) placenta and only PlGF-1 is found in the colon and mammary carcinomas.

The protein localises to the secreted. Growth factor active in angiogenesis and endothelial cell growth, stimulating their proliferation and migration. It binds to the receptor FLT1/VEGFR-1. Isoform PlGF-2 binds NRP1/neuropilin-1 and NRP2/neuropilin-2 in a heparin-dependent manner. Also promotes cell tumor growth. In Homo sapiens (Human), this protein is Placenta growth factor (PGF).